Reading from the N-terminus, the 894-residue chain is DNA mismatch repair protein MutS (894 aa).

An ATP-binding site is contributed by 632–639 (GPNMGGKS).

This sequence belongs to the DNA mismatch repair MutS family.

In terms of biological role, this protein is involved in the repair of mismatches in DNA. It is possible that it carries out the mismatch recognition step. This protein has a weak ATPase activity. In Paraburkholderia phytofirmans (strain DSM 17436 / LMG 22146 / PsJN) (Burkholderia phytofirmans), this protein is DNA mismatch repair protein MutS.